The chain runs to 335 residues: F420-dependent glucose-6-phosphate dehydrogenase (335 aa).

Asp-40 lines the coenzyme F420-(gamma-Glu)n pocket. His-41 (proton donor) is an active-site residue. Residues Thr-77 and 108 to 109 (TG) contribute to the coenzyme F420-(gamma-Glu)n site. Residue Glu-110 is the Proton acceptor of the active site. Coenzyme F420-(gamma-Glu)n-binding positions include Asn-113, 177–178 (GG), and 180–181 (VV). Substrate is bound by residues Thr-195, Lys-198, Lys-259, and Arg-283.

The protein belongs to the F420-dependent glucose-6-phosphate dehydrogenase family. In terms of assembly, homodimer.

The catalysed reaction is oxidized coenzyme F420-(gamma-L-Glu)(n) + D-glucose 6-phosphate + H(+) = 6-phospho-D-glucono-1,5-lactone + reduced coenzyme F420-(gamma-L-Glu)(n). Functionally, catalyzes the coenzyme F420-dependent oxidation of glucose 6-phosphate (G6P) to 6-phosphogluconolactone. This is F420-dependent glucose-6-phosphate dehydrogenase from Segniliparus rotundus (strain ATCC BAA-972 / CDC 1076 / CIP 108378 / DSM 44985 / JCM 13578).